Consider the following 250-residue polypeptide: Proteasome subunit alpha type-4-A (250 aa).

Glycyl lysine isopeptide (Lys-Gly) (interchain with G-Cter in ubiquitin) cross-links involve residues Lys40 and Lys64.

The protein belongs to the peptidase T1A family. As to quaternary structure, component of the 20S core complex of the 26S proteasome. The 26S proteasome is composed of a core protease (CP), known as the 20S proteasome, capped at one or both ends by the 19S regulatory particle (RP/PA700). The 20S proteasome core is composed of 28 subunits that are arranged in four stacked rings, resulting in a barrel-shaped structure. The two end rings are each formed by seven alpha subunits, and the two central rings are each formed by seven beta subunits. The catalytic chamber with the active sites is on the inside of the barrel. As to expression, ubiquitous low levels, higher expression in siliques and flowers.

It is found in the cytoplasm. It localises to the nucleus. Functionally, the proteasome is a multicatalytic proteinase complex which is characterized by its ability to cleave peptides with Arg, Phe, Tyr, Leu, and Glu adjacent to the leaving group at neutral or slightly basic pH. The proteasome has an ATP-dependent proteolytic activity. This Arabidopsis thaliana (Mouse-ear cress) protein is Proteasome subunit alpha type-4-A (PAC1).